A 143-amino-acid polypeptide reads, in one-letter code: ATP synthase F(0) complex subunit C2, mitochondrial (143 aa).

A mitochondrion-targeting transit peptide spans methionine 1–arginine 68. A helical transmembrane segment spans residues valine 84–tyrosine 104. Lysine 111 carries the post-translational modification N6,N6,N6-trimethyllysine. A helical transmembrane segment spans residues isoleucine 119 to isoleucine 139.

The protein belongs to the ATPase C chain family. F-type ATPases have 2 components, CF(1) - the catalytic core - and CF(0) - the membrane proton channel. CF(1) has five subunits: alpha(3), beta(3), gamma(1), delta(1), epsilon(1). CF(0) has three main subunits: a, b and c. Interacts with DNAJC30; interaction is direct. In terms of processing, trimethylated by ATPSCKMT at Lys-111. Methylation is required for proper incorporation of the C subunit into the ATP synthase complex and mitochondrial respiration.

Its subcellular location is the mitochondrion membrane. Mitochondrial membrane ATP synthase (F(1)F(0) ATP synthase or Complex V) produces ATP from ADP in the presence of a proton gradient across the membrane which is generated by electron transport complexes of the respiratory chain. F-type ATPases consist of two structural domains, F(1) - containing the extramembraneous catalytic core and F(0) - containing the membrane proton channel, linked together by a central stalk and a peripheral stalk. During catalysis, ATP synthesis in the catalytic domain of F(1) is coupled via a rotary mechanism of the central stalk subunits to proton translocation. Part of the complex F(0) domain. A homomeric c-ring of probably 10 subunits is part of the complex rotary element. The protein is ATP synthase F(0) complex subunit C2, mitochondrial of Bos taurus (Bovine).